Consider the following 284-residue polypeptide: NADPH-dependent 7-cyano-7-deazaguanine reductase (284 aa).

Isoleucine 91 to serine 93 contacts substrate. Residue serine 93–lysine 94 coordinates NADPH. The active-site Thioimide intermediate is the cysteine 192. Catalysis depends on aspartate 199, which acts as the Proton donor. Histidine 231–glutamate 232 provides a ligand contact to substrate. Arginine 260–glycine 261 is a binding site for NADPH.

Belongs to the GTP cyclohydrolase I family. QueF type 2 subfamily. In terms of assembly, homodimer.

It localises to the cytoplasm. The catalysed reaction is 7-aminomethyl-7-carbaguanine + 2 NADP(+) = 7-cyano-7-deazaguanine + 2 NADPH + 3 H(+). It functions in the pathway tRNA modification; tRNA-queuosine biosynthesis. Functionally, catalyzes the NADPH-dependent reduction of 7-cyano-7-deazaguanine (preQ0) to 7-aminomethyl-7-deazaguanine (preQ1). In Shewanella denitrificans (strain OS217 / ATCC BAA-1090 / DSM 15013), this protein is NADPH-dependent 7-cyano-7-deazaguanine reductase.